Reading from the N-terminus, the 99-residue chain is Large ribosomal subunit protein uL23 (99 aa).

It belongs to the universal ribosomal protein uL23 family. Part of the 50S ribosomal subunit. Contacts protein L29, and trigger factor when it is bound to the ribosome.

In terms of biological role, one of the early assembly proteins it binds 23S rRNA. One of the proteins that surrounds the polypeptide exit tunnel on the outside of the ribosome. Forms the main docking site for trigger factor binding to the ribosome. This chain is Large ribosomal subunit protein uL23, found in Xanthomonas axonopodis pv. citri (strain 306).